A 732-amino-acid polypeptide reads, in one-letter code: Catalase-peroxidase (732 aa).

An N-terminal signal peptide occupies residues 1 to 15 (MSTESKCPFAGGAYA). Residues 96-219 (WHSAGTYRIY…LGAVQMGLIY (124 aa)) constitute a cross-link (tryptophyl-tyrosyl-methioninium (Trp-Tyr) (with M-245)). His-97 serves as the catalytic Proton acceptor. Positions 219-245 (YVNPEGPNGNPDPLASARDIRETFARM) form a cross-link, tryptophyl-tyrosyl-methioninium (Tyr-Met) (with W-96). His-260 serves as a coordination point for heme b.

It belongs to the peroxidase family. Peroxidase/catalase subfamily. As to quaternary structure, homodimer or homotetramer. Heme b is required as a cofactor. In terms of processing, formation of the three residue Trp-Tyr-Met cross-link is important for the catalase, but not the peroxidase activity of the enzyme.

The enzyme catalyses H2O2 + AH2 = A + 2 H2O. It carries out the reaction 2 H2O2 = O2 + 2 H2O. In terms of biological role, bifunctional enzyme with both catalase and broad-spectrum peroxidase activity. In Acidobacterium capsulatum (strain ATCC 51196 / DSM 11244 / BCRC 80197 / JCM 7670 / NBRC 15755 / NCIMB 13165 / 161), this protein is Catalase-peroxidase.